The chain runs to 348 residues: 3'-dehydrocarminate deglycosidase alpha subunit (348 aa).

Glutamate 145 lines the Mg(2+) pocket. Histidine 147 serves as the catalytic Proton acceptor. The Mg(2+) site is built by aspartate 177, histidine 275, and glutamate 311.

This sequence belongs to the C-glycoside deglycosidase alpha subunit family. As to quaternary structure, heterodimer composed of an alpha subunit (CarB) and a beta subunit (CarC). It depends on Mg(2+) as a cofactor.

The enzyme catalyses 3'-dehydrocarminate + H(+) = kermesate + 1,5-anhydro-D-erythro-hex-1-en-3-ulose. With respect to regulation, activity is strongly reduced in the presence of chelating agents. In terms of biological role, carbon-carbon bond-cleaving enzyme which participates in a carminate degradation pathway. Cleaves the C-C bond in 3'-dehydrocarminate to form kermesate. Also shows weak activity with other C-glycosides, such as 3''-dehydropuerarin (3''-oxo-puerarin), 3''-dehydroisoorientin (3''-oxo-homoorientin) and 3'-dehydromangiferin (3'-oxo-mangiferin). In Microbacterium sp, this protein is 3'-dehydrocarminate deglycosidase alpha subunit.